The chain runs to 177 residues: Dual-action ribosomal maturation protein DarP (177 aa).

Belongs to the DarP family.

The protein localises to the cytoplasm. Its function is as follows. Member of a network of 50S ribosomal subunit biogenesis factors which assembles along the 30S-50S interface, preventing incorrect 23S rRNA structures from forming. Promotes peptidyl transferase center (PTC) maturation. In Histophilus somni (strain 2336) (Haemophilus somnus), this protein is Dual-action ribosomal maturation protein DarP.